The following is a 697-amino-acid chain: Alpha-1,4-glucan:maltose-1-phosphate maltosyltransferase (697 aa).

K284 is an alpha-maltose 1-phosphate binding site. Residues 286 to 305 (RNNSVTAAPGDVGSPWAIGS) form a disordered region. 2 residues coordinate alpha-maltose 1-phosphate: Q344 and D379. D414 functions as the Nucleophile in the catalytic mechanism. Alpha-maltose 1-phosphate is bound at residue N415. E443 (proton donor) is an active-site residue. 553 to 554 (KY) lines the alpha-maltose 1-phosphate pocket.

Belongs to the glycosyl hydrolase 13 family. GlgE subfamily. In terms of assembly, homodimer.

It carries out the reaction alpha-maltose 1-phosphate + [(1-&gt;4)-alpha-D-glucosyl](n) = [(1-&gt;4)-alpha-D-glucosyl](n+2) + phosphate. It participates in glycan biosynthesis; glycogen biosynthesis. Its activity is regulated as follows. The transfer reaction from maltose-1-P to glycogen is inhibited by micromolar amounts of inorganic phosphate or arsenate but is only slightly inhibited by millimolar concentrations of glucose-1-P, glucose-6-P, or inorganic pyrophosphate. Is also inhibited by ATP, by 1,4-dideoxy-1,4-imino-D-arabinitol (DIA), but not by isofagomine. Maltosyltransferase that uses maltose 1-phosphate (M1P) as the sugar donor to elongate linear or branched alpha-(1-&gt;4)-glucans. Is also able to catalyze the reverse reaction in vitro. Cannot use glucose 1-phosphate as substrate. Is involved in a branched alpha-glucan biosynthetic pathway from trehalose, together with TreS, Mak and GlgB. The polypeptide is Alpha-1,4-glucan:maltose-1-phosphate maltosyltransferase (glgE) (Mycolicibacterium smegmatis (strain ATCC 700084 / mc(2)155) (Mycobacterium smegmatis)).